We begin with the raw amino-acid sequence, 688 residues long: Polyphosphate kinase (688 aa).

Asn-45 provides a ligand contact to ATP. Arg-375 and Arg-405 together coordinate Mg(2+). Positions 430-464 constitute a PLD phosphodiesterase domain; it reads PGLKIHAKLFLISRKEGDDVVRYAHIGTGNFNEKT. Catalysis depends on His-435, which acts as the Phosphohistidine intermediate. ATP is bound by residues Tyr-468, Arg-564, and His-592.

It belongs to the polyphosphate kinase 1 (PPK1) family. It depends on Mg(2+) as a cofactor. An intermediate of this reaction is the autophosphorylated ppk in which a phosphate is covalently linked to a histidine residue through a N-P bond.

The enzyme catalyses [phosphate](n) + ATP = [phosphate](n+1) + ADP. Functionally, catalyzes the reversible transfer of the terminal phosphate of ATP to form a long-chain polyphosphate (polyP). This is Polyphosphate kinase from Salmonella typhimurium (strain LT2 / SGSC1412 / ATCC 700720).